Here is a 411-residue protein sequence, read N- to C-terminus: Peptidase T (411 aa).

Position 79 (histidine 79) interacts with Zn(2+). The active site involves aspartate 81. Position 142 (aspartate 142) interacts with Zn(2+). Residue glutamate 176 is the Proton acceptor of the active site. Residues glutamate 177, aspartate 199, and histidine 381 each coordinate Zn(2+).

The protein belongs to the peptidase M20B family. Zn(2+) serves as cofactor.

The protein resides in the cytoplasm. It catalyses the reaction Release of the N-terminal residue from a tripeptide.. In terms of biological role, cleaves the N-terminal amino acid of tripeptides. This Geobacillus thermodenitrificans (strain NG80-2) protein is Peptidase T.